Reading from the N-terminus, the 510-residue chain is Cytochrome c-552 (510 aa).

The first 50 residues, 1 to 50 (MVVFLFILYRQSDLKFKSMNGVIIVNTLKKRLFVATTMIWGLSVTLPVLA), serve as a signal peptide directing secretion. Residue His124 participates in heme c binding. Cys152, Cys155, and Lys156 together coordinate heme. Positions 190, 193, 194, 239, 242, and 243 each coordinate heme c. 4 residues coordinate Ca(2+): Glu245, Tyr246, Lys291, and Gln293. Residue Tyr246 coordinates substrate. Substrate is bound at residue His294. Residues His305, Cys312, Cys315, His316, His331, Cys344, Cys347, His348, and His423 each coordinate heme c.

This sequence belongs to the cytochrome c-552 family. Ca(2+) is required as a cofactor. The cofactor is heme c.

It is found in the periplasm. It catalyses the reaction 6 Fe(III)-[cytochrome c] + NH4(+) + 2 H2O = 6 Fe(II)-[cytochrome c] + nitrite + 8 H(+). It participates in nitrogen metabolism; nitrate reduction (assimilation). In terms of biological role, catalyzes the reduction of nitrite to ammonia, consuming six electrons in the process. In Pasteurella multocida (strain Pm70), this protein is Cytochrome c-552.